We begin with the raw amino-acid sequence, 404 residues long: Bifunctional enzyme IspD/IspF (404 aa).

The interval 1–243 is 2-C-methyl-D-erythritol 4-phosphate cytidylyltransferase; it reads MQAEEQFSCG…KLTRMAIPDV (243 aa). Residues 244–404 are 2-C-methyl-D-erythritol 2,4-cyclodiphosphate synthase; that stretch reads RTGNGYDVHQ…TVVYASGGDA (161 aa). 2 residues coordinate a divalent metal cation: D250 and H252. 4-CDP-2-C-methyl-D-erythritol 2-phosphate is bound by residues 250 to 252 and 276 to 277; these read DVH and HS. H284 contributes to the a divalent metal cation binding site. 4-CDP-2-C-methyl-D-erythritol 2-phosphate is bound by residues 298-300, 374-377, F381, and R384; these read DIG and TTNE.

It in the N-terminal section; belongs to the IspD/TarI cytidylyltransferase family. IspD subfamily. In the C-terminal section; belongs to the IspF family. A divalent metal cation is required as a cofactor.

The catalysed reaction is 2-C-methyl-D-erythritol 4-phosphate + CTP + H(+) = 4-CDP-2-C-methyl-D-erythritol + diphosphate. The enzyme catalyses 4-CDP-2-C-methyl-D-erythritol 2-phosphate = 2-C-methyl-D-erythritol 2,4-cyclic diphosphate + CMP. It participates in isoprenoid biosynthesis; isopentenyl diphosphate biosynthesis via DXP pathway; isopentenyl diphosphate from 1-deoxy-D-xylulose 5-phosphate: step 2/6. It functions in the pathway isoprenoid biosynthesis; isopentenyl diphosphate biosynthesis via DXP pathway; isopentenyl diphosphate from 1-deoxy-D-xylulose 5-phosphate: step 4/6. Functionally, bifunctional enzyme that catalyzes the formation of 4-diphosphocytidyl-2-C-methyl-D-erythritol from CTP and 2-C-methyl-D-erythritol 4-phosphate (MEP) (IspD), and catalyzes the conversion of 4-diphosphocytidyl-2-C-methyl-D-erythritol 2-phosphate (CDP-ME2P) to 2-C-methyl-D-erythritol 2,4-cyclodiphosphate (ME-CPP) with a corresponding release of cytidine 5-monophosphate (CMP) (IspF). This Sinorhizobium medicae (strain WSM419) (Ensifer medicae) protein is Bifunctional enzyme IspD/IspF.